The primary structure comprises 674 residues: Metal-nicotianamine transporter YSL2 (674 aa).

Residues 1 to 29 (MEAAAPEIERCDAGDVESDHDGAAAAAER) form a disordered region. Basic and acidic residues predominate over residues 7 to 22 (EIERCDAGDVESDHDG). The next 14 helical transmembrane spans lie at 41-61 (GMVA…KLAL), 64-84 (GIIP…LRGW), 118-138 (CAVA…LLAL), 162-182 (GVGW…LNLL), 224-244 (GFLN…FYTG), 283-303 (LVNL…WPLI), 329-349 (FMCV…VTGI), 392-412 (LAYA…PIMF), 420-440 (VVVA…GTGL), 452-472 (IALF…AGLV), 506-526 (VGQA…FLLF), 559-579 (SALP…SVLI), 604-624 (FLVG…VFAW), and 633-653 (ALLV…WMFP).

It belongs to the YSL (TC 2.A.67.2) family. Expressed in phloem cells of vascular bundles in leaves and leaf sheaths. Expressed at low levels in phloem companion cells in the central cylinder of roots, but not in the epidermal or cortical cells.

It localises to the cell membrane. Functionally, involved in the phloem transport of iron and manganese and their translocation into the grain. Transports iron- and manganese-nicotianamine chelates, but not iron-phytosiderophore. The chain is Metal-nicotianamine transporter YSL2 (YSL2) from Oryza sativa subsp. japonica (Rice).